The chain runs to 547 residues: Threonylcarbamoyladenosine tRNA methylthiotransferase (547 aa).

Residues 30–51 form a disordered region; the sequence is ARKSVVPRARKHKQETGEQMQT. The MTTase N-terminal domain maps to 59–167; the sequence is QKVWLKTWGC…VVEVVDEAIK (109 aa). [4Fe-4S] cluster contacts are provided by Cys68, Cys104, Cys133, Cys209, Cys213, and Cys216. Residues 195-426 enclose the Radical SAM core domain; sequence RKNPLIEIIS…ALFHSYRPYD (232 aa). In terms of domain architecture, TRAM spans 426 to 488; it reads DHKMGEQQQV…KHYMKGRPLE (63 aa). Residues 527 to 547 form a helical membrane-spanning segment; the sequence is ILAVVLLLSAVLLALLMEKLL.

The protein belongs to the methylthiotransferase family. CDKAL1 subfamily. The cofactor is [4Fe-4S] cluster.

It localises to the endoplasmic reticulum membrane. It catalyses the reaction N(6)-L-threonylcarbamoyladenosine(37) in tRNA + (sulfur carrier)-SH + AH2 + 2 S-adenosyl-L-methionine = 2-methylsulfanyl-N(6)-L-threonylcarbamoyladenosine(37) in tRNA + (sulfur carrier)-H + 5'-deoxyadenosine + L-methionine + A + S-adenosyl-L-homocysteine + 2 H(+). Functionally, catalyzes the methylthiolation of N6-threonylcarbamoyladenosine (t(6)A), leading to the formation of 2-methylthio-N6-threonylcarbamoyladenosine (ms(2)t(6)A) at position 37 in tRNAs that read codons beginning with adenine. The polypeptide is Threonylcarbamoyladenosine tRNA methylthiotransferase (cdkal1) (Danio rerio (Zebrafish)).